The sequence spans 295 residues: 4-hydroxy-tetrahydrodipicolinate synthase (295 aa).

Thr48 is a pyruvate binding site. The Proton donor/acceptor role is filled by Tyr135. The active-site Schiff-base intermediate with substrate is the Lys163. Val204 contributes to the pyruvate binding site.

This sequence belongs to the DapA family. In terms of assembly, homotetramer; dimer of dimers.

It is found in the cytoplasm. The enzyme catalyses L-aspartate 4-semialdehyde + pyruvate = (2S,4S)-4-hydroxy-2,3,4,5-tetrahydrodipicolinate + H2O + H(+). It functions in the pathway amino-acid biosynthesis; L-lysine biosynthesis via DAP pathway; (S)-tetrahydrodipicolinate from L-aspartate: step 3/4. Its function is as follows. Catalyzes the condensation of (S)-aspartate-beta-semialdehyde [(S)-ASA] and pyruvate to 4-hydroxy-tetrahydrodipicolinate (HTPA). The sequence is that of 4-hydroxy-tetrahydrodipicolinate synthase from Francisella philomiragia subsp. philomiragia (strain ATCC 25017 / CCUG 19701 / FSC 153 / O#319-036).